We begin with the raw amino-acid sequence, 95 residues long: Co-chaperonin GroES (95 aa).

The protein belongs to the GroES chaperonin family. As to quaternary structure, heptamer of 7 subunits arranged in a ring. Interacts with the chaperonin GroEL.

The protein localises to the cytoplasm. Its function is as follows. Together with the chaperonin GroEL, plays an essential role in assisting protein folding. The GroEL-GroES system forms a nano-cage that allows encapsulation of the non-native substrate proteins and provides a physical environment optimized to promote and accelerate protein folding. GroES binds to the apical surface of the GroEL ring, thereby capping the opening of the GroEL channel. The sequence is that of Co-chaperonin GroES from Novosphingobium aromaticivorans (strain ATCC 700278 / DSM 12444 / CCUG 56034 / CIP 105152 / NBRC 16084 / F199).